Reading from the N-terminus, the 414-residue chain is Succinylornithine transaminase (414 aa).

Lys-260 is subject to N6-(pyridoxal phosphate)lysine.

The protein belongs to the class-III pyridoxal-phosphate-dependent aminotransferase family. AstC subfamily. Pyridoxal 5'-phosphate is required as a cofactor.

It catalyses the reaction N(2)-succinyl-L-ornithine + 2-oxoglutarate = N-succinyl-L-glutamate 5-semialdehyde + L-glutamate. It functions in the pathway amino-acid degradation; L-arginine degradation via AST pathway; L-glutamate and succinate from L-arginine: step 3/5. Catalyzes the transamination of N(2)-succinylornithine and alpha-ketoglutarate into N(2)-succinylglutamate semialdehyde and glutamate. Can also act as an acetylornithine aminotransferase. The polypeptide is Succinylornithine transaminase (Yersinia pseudotuberculosis serotype I (strain IP32953)).